A 361-amino-acid chain; its full sequence is Peptide chain release factor 1 (361 aa).

Position 235 is an N5-methylglutamine (Q235).

This sequence belongs to the prokaryotic/mitochondrial release factor family. Post-translationally, methylated by PrmC. Methylation increases the termination efficiency of RF1.

Its subcellular location is the cytoplasm. Peptide chain release factor 1 directs the termination of translation in response to the peptide chain termination codons UAG and UAA. The chain is Peptide chain release factor 1 from Rhodopseudomonas palustris (strain ATCC BAA-98 / CGA009).